Here is a 324-residue protein sequence, read N- to C-terminus: 4-hydroxy-2-oxoglutarate aldolase, mitochondrial (324 aa).

Residues 1-22 constitute a mitochondrion transit peptide; sequence MFAHRSFSLLCRRSAVTSWRSQ. 74 to 75 contributes to the substrate binding site; sequence SN. Lysine 193 (schiff-base intermediate with substrate) is an active-site residue. Substrate is bound by residues serine 195 and glycine 219.

This sequence belongs to the DapA family. In terms of assembly, homotetramer.

It is found in the mitochondrion. It catalyses the reaction (4S)-4-hydroxy-2-oxoglutarate = glyoxylate + pyruvate. It carries out the reaction (4R)-4-hydroxy-2-oxoglutarate = glyoxylate + pyruvate. Its activity is regulated as follows. Inhibited by divalent cations. Functionally, catalyzes the final step in the metabolic pathway of hydroxyproline. This is 4-hydroxy-2-oxoglutarate aldolase, mitochondrial from Danio rerio (Zebrafish).